The following is a 1581-amino-acid chain: Pentafunctional AROM polypeptide (1581 aa).

The segment at 1-383 is 3-dehydroquinate synthase; that stretch reads MKEIIKLSIL…YEKKASSVSD (383 aa). Residues 43-45, 80-83, 111-113, and Asp116 contribute to the NAD(+) site; these read DSN, EKSK, and GGV. A 7-phospho-2-dehydro-3-deoxy-D-arabino-heptonate-binding site is contributed by Arg127. NAD(+) is bound at residue 136-137; it reads TT. The 7-phospho-2-dehydro-3-deoxy-D-arabino-heptonate site is built by Asp143 and Lys149. Lys158 contributes to the NAD(+) binding site. Asn159 contributes to the 7-phospho-2-dehydro-3-deoxy-D-arabino-heptonate binding site. NAD(+)-binding positions include 176–179 and Asn187; that span reads FLET. Glu191 is a Zn(2+) binding site. 7-phospho-2-dehydro-3-deoxy-D-arabino-heptonate is bound by residues 191 to 194 and Lys249; that span reads ELIK. Glu259 (proton acceptor; for 3-dehydroquinate synthase activity) is an active-site residue. 7-phospho-2-dehydro-3-deoxy-D-arabino-heptonate-binding positions include 263–267 and His270; that span reads RTLLN. His270 provides a ligand contact to Zn(2+). Residue His274 is the Proton acceptor; for 3-dehydroquinate synthase activity of the active site. 7-phospho-2-dehydro-3-deoxy-D-arabino-heptonate-binding residues include His286 and Lys355. Residue His286 coordinates Zn(2+). The interval 396–845 is EPSP synthase; the sequence is LYGIPLNAFQ…WDILNSTFKV (450 aa). The For EPSP synthase activity role is filled by Cys827. The segment at 868–1065 is shikimate kinase; sequence ECTIFLIGMR…LKKKRSYFLS (198 aa). 875–882 provides a ligand contact to ATP; the sequence is GMRGAGKT. The segment at 1066–1285 is 3-dehydroquinase; it reads LAFSDLENIF…IAPGQLSIKE (220 aa). The Proton acceptor; for 3-dehydroquinate dehydratase activity role is filled by His1189. Lys1217 (schiff-base intermediate with substrate; for 3-dehydroquinate dehydratase activity) is an active-site residue. The tract at residues 1298–1581 is shikimate dehydrogenase; the sequence is EKKYFLFGKP…VKYAILGPNK (284 aa).

This sequence in the N-terminal section; belongs to the sugar phosphate cyclases superfamily. Dehydroquinate synthase family. In the 2nd section; belongs to the EPSP synthase family. The protein in the 3rd section; belongs to the shikimate kinase family. It in the 4th section; belongs to the type-I 3-dehydroquinase family. This sequence in the C-terminal section; belongs to the shikimate dehydrogenase family. Homodimer. Zn(2+) is required as a cofactor.

The protein resides in the cytoplasm. It carries out the reaction 7-phospho-2-dehydro-3-deoxy-D-arabino-heptonate = 3-dehydroquinate + phosphate. It catalyses the reaction 3-dehydroquinate = 3-dehydroshikimate + H2O. The enzyme catalyses shikimate + NADP(+) = 3-dehydroshikimate + NADPH + H(+). The catalysed reaction is shikimate + ATP = 3-phosphoshikimate + ADP + H(+). It carries out the reaction 3-phosphoshikimate + phosphoenolpyruvate = 5-O-(1-carboxyvinyl)-3-phosphoshikimate + phosphate. Its pathway is metabolic intermediate biosynthesis; chorismate biosynthesis; chorismate from D-erythrose 4-phosphate and phosphoenolpyruvate: step 2/7. It functions in the pathway metabolic intermediate biosynthesis; chorismate biosynthesis; chorismate from D-erythrose 4-phosphate and phosphoenolpyruvate: step 3/7. It participates in metabolic intermediate biosynthesis; chorismate biosynthesis; chorismate from D-erythrose 4-phosphate and phosphoenolpyruvate: step 4/7. The protein operates within metabolic intermediate biosynthesis; chorismate biosynthesis; chorismate from D-erythrose 4-phosphate and phosphoenolpyruvate: step 5/7. Its pathway is metabolic intermediate biosynthesis; chorismate biosynthesis; chorismate from D-erythrose 4-phosphate and phosphoenolpyruvate: step 6/7. The AROM polypeptide catalyzes 5 consecutive enzymatic reactions in prechorismate polyaromatic amino acid biosynthesis. This is Pentafunctional AROM polypeptide (arom) from Pneumocystis carinii.